Reading from the N-terminus, the 282-residue chain is Methyltransferase tpcH (282 aa).

This sequence belongs to the class I-like SAM-binding methyltransferase superfamily. Specifically expressed in conidia.

The protein operates within secondary metabolite biosynthesis. Functionally, methyltransferase; part of the gene cluster that mediates the biosynthesis of trypacidin, a mycotoxin with antiprotozoal activity and that plays a role in the infection process. The pathway begins with the synthesis of atrochrysone thioester by the polyketide synthase (PKS) tpcC. The atrochrysone carboxyl ACP thioesterase tpcB then breaks the thioester bond and releases the atrochrysone carboxylic acid from tpcC. The decarboxylase tpcK converts atrochrysone carboxylic acid to atrochrysone which is further reduced into emodin anthrone. The next step is performed by the emodin anthrone oxygenase tpcL that catalyzes the oxidation of emodinanthrone to emodin. Emodin O-methyltransferase encoded by tpcA catalyzes methylation of the 8-hydroxy group of emodin to form questin. Ring cleavage of questin by questin oxidase tpcI leads to desmethylsulochrin via several intermediates including questin epoxide. Another methylation step catalyzed by tpcM leads to the formation of sulochrin which is further converted to monomethylsulfochrin by tpcH. Finally, the tpcJ catalyzes the conversion of monomethylsulfochrin to trypacidin. Trypacidin is toxic for human pulmonary and bronchial epithelial cells by initiating the intracellular formation of nitric oxide (NO) and hydrogen peroxide (H(2)O(2)), thus triggering host necrotic cell death. The trypacidin pathway is also able to produce endocrocin via a distinct route from the endocrocin Enc pathway. The protein is Methyltransferase tpcH of Aspergillus fumigatus (strain ATCC MYA-4609 / CBS 101355 / FGSC A1100 / Af293) (Neosartorya fumigata).